The primary structure comprises 500 residues: L-arabinose isomerase (500 aa).

Mn(2+) is bound by residues Glu-306, Glu-333, His-350, and His-450.

This sequence belongs to the arabinose isomerase family. Homohexamer. Requires Mn(2+) as cofactor.

It catalyses the reaction beta-L-arabinopyranose = L-ribulose. It functions in the pathway carbohydrate degradation; L-arabinose degradation via L-ribulose; D-xylulose 5-phosphate from L-arabinose (bacterial route): step 1/3. In terms of biological role, catalyzes the conversion of L-arabinose to L-ribulose. The polypeptide is L-arabinose isomerase (Salmonella paratyphi A (strain ATCC 9150 / SARB42)).